The sequence spans 20 residues: Punein (20 aa).

The Barwin domain maps to 1-20 (YHYYNPEENHFCATWDASKP).

Post-translationally, the N-terminus is blocked.

The sequence is that of Punein from Punica granatum (Pomegranate).